Here is a 679-residue protein sequence, read N- to C-terminus: PHD finger protein PERSISTENT TAPETAL CELL 1 (679 aa).

The PHD-type zinc-finger motif lies at 620-670 (VVDCACGAVDDDGERMACCDICEAWQHTRCAGIADTEDAPHVFLCSRCDND).

Probable transcriptional activator required for tapetal programmed cell death (PCD) and degeneration, and pollen development in anthers. This is PHD finger protein PERSISTENT TAPETAL CELL 1 from Oryza sativa subsp. japonica (Rice).